A 314-amino-acid polypeptide reads, in one-letter code: Ribonuclease Z (314 aa).

Zn(2+) is bound by residues His63, His65, Asp67, His68, His142, Asp205, and His263. Residue Asp67 is the Proton acceptor of the active site.

This sequence belongs to the RNase Z family. As to quaternary structure, homodimer. It depends on Zn(2+) as a cofactor.

The catalysed reaction is Endonucleolytic cleavage of RNA, removing extra 3' nucleotides from tRNA precursor, generating 3' termini of tRNAs. A 3'-hydroxy group is left at the tRNA terminus and a 5'-phosphoryl group is left at the trailer molecule.. In terms of biological role, zinc phosphodiesterase, which displays some tRNA 3'-processing endonuclease activity. Probably involved in tRNA maturation, by removing a 3'-trailer from precursor tRNA. The sequence is that of Ribonuclease Z from Kineococcus radiotolerans (strain ATCC BAA-149 / DSM 14245 / SRS30216).